Reading from the N-terminus, the 302-residue chain is Probable 2-(5''-triphosphoribosyl)-3'-dephosphocoenzyme-A synthase (302 aa).

The protein belongs to the CitG/MdcB family.

It catalyses the reaction 3'-dephospho-CoA + ATP = 2'-(5''-triphospho-alpha-D-ribosyl)-3'-dephospho-CoA + adenine. This is Probable 2-(5''-triphosphoribosyl)-3'-dephosphocoenzyme-A synthase from Albidiferax ferrireducens (strain ATCC BAA-621 / DSM 15236 / T118) (Rhodoferax ferrireducens).